The primary structure comprises 499 residues: 6-hydroxynicotinate reductase (499 aa).

4Fe-4S ferredoxin-type domains are found at residues 1–29 (MFKI…YEKK) and 31–61 (KGAI…NDAP). Residues Cys9, Cys12, Cys15, Cys19, Cys41, Cys44, Cys47, and Cys51 each contribute to the [4Fe-4S] cluster site.

As to quaternary structure, homotetramer. Requires an oxidized flavin as cofactor. [2Fe-2S] cluster serves as cofactor. The cofactor is [4Fe-4S] cluster.

It carries out the reaction 1,4,5,6-tetrahydro-6-oxonicotinate + oxidized 2[4Fe-4S]-[ferredoxin] = 6-hydroxynicotinate + reduced 2[4Fe-4S]-[ferredoxin] + 2 H(+). Its pathway is cofactor degradation; nicotinate degradation; propanoate and pyruvate from 6-hydroxynicotinate: step 1/8. In terms of biological role, catalyzes the reversible reduction of 6-hydroxynicotinate to 6-oxo-1,4,5,6-tetrahydronicotinate. The sequence is that of 6-hydroxynicotinate reductase from Eubacterium barkeri (Clostridium barkeri).